An 87-amino-acid chain; its full sequence is Small ribosomal subunit protein bS20 (87 aa).

It belongs to the bacterial ribosomal protein bS20 family.

Functionally, binds directly to 16S ribosomal RNA. The sequence is that of Small ribosomal subunit protein bS20 from Mycoplasma pneumoniae (strain ATCC 29342 / M129 / Subtype 1) (Mycoplasmoides pneumoniae).